Here is a 651-residue protein sequence, read N- to C-terminus: MBT domain-containing protein 1 (651 aa).

Residues 21–55 (SFGMFDGYDSCSEDTSSSSSSDESEEEVAPLPSSL) form a disordered region. Low complexity predominate over residues 29 to 41 (DSCSEDTSSSSSS). The FCS-type zinc finger occupies 68–103 (PDGKSGMATCEMCGMVGVRDAFYSKTKRFCSVSCSR). Residues C77, C80, C97, and C101 each coordinate Zn(2+). MBT repeat units lie at residues 164–268 (FSWG…LVPP), 276–373 (TNWK…IGHR), 374–479 (FKRT…LTPP), and 487–583 (FKWF…LQPP). Disordered regions lie at residues 581–610 (QPPA…YKGH) and 629–651 (TFLQ…KQEP). Positions 586–596 (QSNKDSQSNIS) are enriched in low complexity. Over residues 597–610 (KQKKKSKSQPYKGH) the composition is skewed to basic residues. The span at 632–643 (QGASDQESNGSG) shows a compositional bias: polar residues.

Monomer. Component of the NuA4 histone acetyltransferase complex.

It localises to the nucleus. The protein resides in the chromosome. Chromatin reader component of the NuA4 histone acetyltransferase complex, a multiprotein complex involved in transcriptional activation of select genes principally by acetylation of nucleosomal histones H4 and H2A. The NuA4 complex plays a direct role in repair of DNA double-strand breaks (DSBs) by promoting homologous recombination (HR). MBTD1 specifically recognizes and binds monomethylated and dimethylated 'Lys-20' on histone H4 (H4K20me1 and H4K20me2, respectively). In the NuA4 complex, MBTD1 promotes recruitment of the complex to H4K20me marks by competing with TP53BP1 for binding to H4K20me. Following recruitment to H4K20me at DNA breaks, the NuA4 complex catalyzes acetylation of 'Lys-15' on histone H2A (H2AK15), blocking the ubiquitination mark required for TP53BP1 localization at DNA breaks, thereby promoting homologous recombination (HR). The chain is MBT domain-containing protein 1 from Xenopus tropicalis (Western clawed frog).